The primary structure comprises 606 residues: UvrABC system protein C (606 aa).

The region spanning glutamine 19–isoleucine 97 is the GIY-YIG domain. Residues glutamate 207–isoleucine 242 enclose the UVR domain.

The protein belongs to the UvrC family. As to quaternary structure, interacts with UvrB in an incision complex.

The protein resides in the cytoplasm. Its function is as follows. The UvrABC repair system catalyzes the recognition and processing of DNA lesions. UvrC both incises the 5' and 3' sides of the lesion. The N-terminal half is responsible for the 3' incision and the C-terminal half is responsible for the 5' incision. This Wolbachia sp. subsp. Brugia malayi (strain TRS) protein is UvrABC system protein C.